We begin with the raw amino-acid sequence, 466 residues long: 3-isopropylmalate dehydratase large subunit (466 aa).

[4Fe-4S] cluster-binding residues include C347, C407, and C410.

The protein belongs to the aconitase/IPM isomerase family. LeuC type 1 subfamily. Heterodimer of LeuC and LeuD. It depends on [4Fe-4S] cluster as a cofactor.

It catalyses the reaction (2R,3S)-3-isopropylmalate = (2S)-2-isopropylmalate. It functions in the pathway amino-acid biosynthesis; L-leucine biosynthesis; L-leucine from 3-methyl-2-oxobutanoate: step 2/4. In terms of biological role, catalyzes the isomerization between 2-isopropylmalate and 3-isopropylmalate, via the formation of 2-isopropylmaleate. The polypeptide is 3-isopropylmalate dehydratase large subunit (Solibacter usitatus (strain Ellin6076)).